The chain runs to 992 residues: Disks large-associated protein 4 (992 aa).

Residues 1 to 20 are compositionally biased toward basic and acidic residues; the sequence is MKGLGDSRPRHLSDSLDPPH. 2 disordered regions span residues 1 to 31 and 154 to 226; these read MKGLGDSRPRHLSDSLDPPHEPLFAGPDRNP and APSM…ASGL. Residues 162 to 171 are compositionally biased toward gly residues; sequence GKVGGNGGKK. A compositionally biased stretch (basic and acidic residues) spans 172–194; that stretch reads GVLEDGKGRRAKSKERAKAGEPK. Residues 199–208 are compositionally biased toward polar residues; the sequence is SNISGWWSSD. 2 positions are modified to phosphoserine: Ser206 and Ser207. Residue Arg290 is modified to Omega-N-methylarginine. 5 disordered regions span residues 342-435, 527-665, 677-751, 763-798, and 915-992; these read TTLL…SWEE, SVSL…RKLS, VPKE…GPRQ, SYGDNSDPALEASSLPPPDPWMETSSSSPAEPAQPG, and TPEK…QTRL. Phosphoserine occurs at positions 377, 380, 384, 388, 405, 415, and 421. Positions 399 to 413 are enriched in polar residues; the sequence is LRATQQSLGEQSNPR. A compositionally biased stretch (low complexity) spans 528 to 554; sequence VSLQSLSPPPSTGSLSNSRTLPSSSCL. A compositionally biased stretch (polar residues) spans 576–591; that stretch reads VTVQSSTESAQDTYLD. 6 positions are modified to phosphoserine: Ser580, Ser581, Ser609, Ser611, Ser665, and Ser744. Residues 600–620 show a composition bias toward low complexity; that stretch reads TSQSGLSNSSDSLDSSTRPPS. Residue Thr915 is modified to Phosphothreonine. 2 stretches are compositionally biased toward basic and acidic residues: residues 915–925 and 940–958; these read TPEKRKEEKKP and VSRDKASDAGDKQRQEARK. Polar residues predominate over residues 969–978; it reads VRQNSATESA. Ser973 is modified (phosphoserine).

It belongs to the SAPAP family. As to quaternary structure, interacts with DLG1 and DLG4/PSD-95. In terms of tissue distribution, expressed in brain.

It localises to the membrane. In terms of biological role, may play a role in the molecular organization of synapses and neuronal cell signaling. Could be an adapter protein linking ion channel to the subsynaptic cytoskeleton. May induce enrichment of PSD-95/SAP90 at the plasma membrane. This chain is Disks large-associated protein 4 (Dlgap4), found in Rattus norvegicus (Rat).